The following is a 148-amino-acid chain: Putative pre-16S rRNA nuclease (148 aa).

It belongs to the YqgF nuclease family.

It localises to the cytoplasm. Its function is as follows. Could be a nuclease involved in processing of the 5'-end of pre-16S rRNA. This Colwellia psychrerythraea (strain 34H / ATCC BAA-681) (Vibrio psychroerythus) protein is Putative pre-16S rRNA nuclease.